The primary structure comprises 573 residues: Mucin-13 (573 aa).

Residues 1 to 17 form the signal peptide; the sequence is MKGFLLLSLSLLLVTVG. A compositionally biased stretch (low complexity) spans 16 to 234; sequence VGSSSQASST…VPSGGSTGPS (219 aa). The segment at 16–237 is disordered; sequence VGSSSQASST…GGSTGPSDLC (222 aa). At 18–480 the chain is on the extracellular side; that stretch reads SSSQASSTTS…FGYSGMNCKD (463 aa). Positions 233–273 constitute an EGF-like 1 domain; it reads PSDLCNPNPCKGTASCVKLHSKHFCLCLEGYYYNSSLSSCV. Disulfide bonds link cysteine 237-cysteine 248, cysteine 242-cysteine 257, and cysteine 259-cysteine 272. Asparagine 266, asparagine 316, and asparagine 397 each carry an N-linked (GlcNAc...) asparagine glycan. The SEA domain occupies 274 to 391; the sequence is KGTTFPGDIS…DYVSINLCDH (118 aa). EGF-like domains lie at 385–425 and 425–467; these read SINL…PFCV and VAVT…RKCE. 6 cysteine pairs are disulfide-bonded: cysteine 389–cysteine 402, cysteine 394–cysteine 408, cysteine 410–cysteine 424, cysteine 429–cysteine 441, cysteine 433–cysteine 451, and cysteine 453–cysteine 466. A helical transmembrane segment spans residues 481–508; it reads QFQLILTIVGTIAGALILILLIAFIVSA. The Cytoplasmic portion of the chain corresponds to 509–573; that stretch reads RSKNKKKDGE…NQRSMPRPDY (65 aa). Positions 548–573 are disordered; the sequence is PKVRTGVPSQTPNPYANQRSMPRPDY. The segment covering 554 to 567 has biased composition (polar residues); sequence VPSQTPNPYANQRS.

In terms of assembly, homodimer of beta subunits. In terms of processing, cleaved into two subunits, alpha and beta, probably between the first EGF domain and the SEA domain. Beta subunit contains the cytoplasmic tail and alpha subunit the extracellular tail. The homooligomerization into dimers is dependent on intrachain disulfide bonds. Highly N-glycosylated.

It localises to the cell membrane. The protein localises to the secreted. Epithelial and hemopoietic transmembrane mucin that may play a role in cell signaling. In Mus musculus (Mouse), this protein is Mucin-13 (Muc13).